A 620-amino-acid chain; its full sequence is Glutathione-regulated potassium-efflux system protein KefC (620 aa).

A run of 12 helical transmembrane segments spans residues 4–24 (HTLLQALIYLGSAALIVPIAV), 26–46 (LGLGSVLGYLIAGCIIGPWGL), 54–74 (SILHFAEIGVVLMLFVIGLEL), 90–110 (GALQMVVCGGLIGLFCMFLGL), 114–134 (VAELIGMTLALSSTAIAMQAM), 149–169 (FAVLLFQDIAAIPLVAMIPLL), 178–198 (LGAFALSALKVAGALALVVLL), 218–238 (VFSAVALFLVFGFGLLLEEVG), 270–290 (GLLLGLFFIGVGMSIDFGTLV), 294–314 (LRILLLLAGFLAIKIVMLWLV), 327–347 (WFAVLLGQGSEFAFVVFGAAQ), and 359–379 (ALTLAVALSMAATPIFLVLLT). In terms of domain architecture, RCK N-terminal spans 399–518 (QPRVIVAGFG…AGVAMPERET (120 aa)). A disordered region spans residues 599-620 (QGTAEGKHSGEVADEPEVKPSI).

This sequence belongs to the monovalent cation:proton antiporter 2 (CPA2) transporter (TC 2.A.37) family. KefC subfamily. Homodimer. Interacts with the regulatory subunit KefF.

It localises to the cell inner membrane. Functionally, pore-forming subunit of a potassium efflux system that confers protection against electrophiles. Catalyzes K(+)/H(+) antiport. The polypeptide is Glutathione-regulated potassium-efflux system protein KefC (Salmonella agona (strain SL483)).